The primary structure comprises 314 residues: Formate-nitrite transporter (314 aa).

Topologically, residues 1 to 47 are cytoplasmic; the sequence is MQKSTSKYVIDPISIKTNCSSEESYIRCVEYGKGKAHYRNLILLAKA. Residues 48–68 form a helical membrane-spanning segment; that stretch reads ILAGVFVGVCAHASGIAGGLF. At 69-77 the chain is on the extracellular side; the sequence is YYHKLREYV. A helical transmembrane segment spans residues 78–98; sequence GISMSAFVYGFTFPIAFLCII. Residues 99 to 128 are Cytoplasmic-facing; the sequence is CTGSDLFTGNTLAVTTALLQKKLGLLCYMR. A helical membrane pass occupies residues 129–149; it reads VMCISLVGNYIGAVAFAFFVS. Residues 150-185 lie on the Extracellular side of the membrane; sequence YGSGAFSINTDTSKNHIFQFLNDIAIKKVSHSFIEC. Residues 186 to 206 form a helical membrane-spanning segment; that stretch reads ICLAIGCNIFVCLAVYFVLSI. The Cytoplasmic portion of the chain corresponds to 207–211; the sequence is KDGSG. Residues 212-232 form a helical membrane-spanning segment; it reads LVFSVFFAVYAFAIAGYEHII. The Extracellular portion of the chain corresponds to 233 to 260; sequence ANIYTLNLALMISNDISFTQVYFKNLLP. Residues 261 to 281 form a helical membrane-spanning segment; sequence TLIGNYIAGGLVLAFPLFFIY. The Cytoplasmic segment spans residues 282 to 314; that stretch reads RSCYYDYDKMNDELNTVVLKTLSLELQNESNHI.

This sequence belongs to the FNT transporter (TC 1.A.16) family. Homopentamer.

The protein localises to the cell membrane. It is found in the vacuole membrane. The enzyme catalyses (S)-lactate(in) + H(+)(in) = (S)-lactate(out) + H(+)(out). The catalysed reaction is formate(in) + H(+)(in) = formate(out) + H(+)(out). It catalyses the reaction pyruvate(out) + H(+)(out) = pyruvate(in) + H(+)(in). It carries out the reaction acetate(out) + H(+)(out) = acetate(in) + H(+)(in). Its activity is regulated as follows. Inhibited by the Malaria Box compound MMV007839 and its derivatives BH296 and BH267.meta. Its function is as follows. Monocarboxylate-proton symporter that mediates the efflux of the waste product lactate in the intraerythrocytic parasites; active in acidic-to-neutral pH range. Transports L-lactate. The polypeptide is Formate-nitrite transporter (Plasmodium malariae).